The chain runs to 227 residues: MSAPTFRLCPADIGLEVAFAGRSNAGKSSAINALTNQRQLARSSKTPGRTQMINFFNVGDADRRLVDLPGYGYAAVPLEMKKEWQVELEEYLVSRSSLAGLVLMSDIRHPLKFFDEQMLRWAKDGELPVHILLTKADKLKYGASKNALLNTRKRLKELGLNCSIQLFSALRKEGLDELAGVMGNWYEYQLDADKIIESSFALLEGDELEDAIEQDALQKDSSQQDSK.

One can recognise an EngB-type G domain in the interval 13–188 (IGLEVAFAGR…AGVMGNWYEY (176 aa)). Residues 21 to 28 (GRSNAGKS), 48 to 52 (GRTQM), 67 to 70 (DLPG), 134 to 137 (TKAD), and 167 to 169 (FSA) each bind GTP. The Mg(2+) site is built by S28 and T50.

It belongs to the TRAFAC class TrmE-Era-EngA-EngB-Septin-like GTPase superfamily. EngB GTPase family. It depends on Mg(2+) as a cofactor.

Necessary for normal cell division and for the maintenance of normal septation. In Psychrobacter cryohalolentis (strain ATCC BAA-1226 / DSM 17306 / VKM B-2378 / K5), this protein is Probable GTP-binding protein EngB.